Here is an 83-residue protein sequence, read N- to C-terminus: Large ribosomal subunit protein bL31B (83 aa).

Belongs to the bacterial ribosomal protein bL31 family. Type B subfamily. Part of the 50S ribosomal subunit.

In Lactobacillus johnsonii (strain CNCM I-12250 / La1 / NCC 533), this protein is Large ribosomal subunit protein bL31B.